Reading from the N-terminus, the 343-residue chain is Phosphoribosylformylglycinamidine cyclo-ligase (343 aa).

The protein belongs to the AIR synthase family.

The protein localises to the cytoplasm. The enzyme catalyses 2-formamido-N(1)-(5-O-phospho-beta-D-ribosyl)acetamidine + ATP = 5-amino-1-(5-phospho-beta-D-ribosyl)imidazole + ADP + phosphate + H(+). The protein operates within purine metabolism; IMP biosynthesis via de novo pathway; 5-amino-1-(5-phospho-D-ribosyl)imidazole from N(2)-formyl-N(1)-(5-phospho-D-ribosyl)glycinamide: step 2/2. In Rippkaea orientalis (strain PCC 8801 / RF-1) (Cyanothece sp. (strain PCC 8801)), this protein is Phosphoribosylformylglycinamidine cyclo-ligase.